The primary structure comprises 374 residues: UPF0754 membrane protein SA1664 (374 aa).

The next 2 helical transmembrane spans lie at leucine 4–isoleucine 24 and serine 354–valine 374.

Belongs to the UPF0754 family.

Its subcellular location is the cell membrane. The sequence is that of UPF0754 membrane protein SA1664 from Staphylococcus aureus (strain N315).